A 1088-amino-acid chain; its full sequence is Protein argonaute 18 (1088 aa).

The tract at residues Met1 to Pro220 is disordered. Gly residues-rich tracts occupy residues Gly20 to Arg30, Tyr51 to Arg86, Gly95 to His127, Gly135 to Tyr148, Ala161 to Gly182, and Gly191 to Ser206. Over residues Gln211–Pro220 the composition is skewed to pro residues. The PAZ domain maps to Thr477–Pro574. Residues Leu747–Thr1056 form the Piwi domain.

Belongs to the argonaute family. Ago subfamily.

Its function is as follows. Probably involved in the RNA silencing pathway. May bind to short RNAs such as microRNAs (miRNAs) or short interfering RNAs (siRNAs), and represses the translation of mRNAs which are complementary to them. The sequence is that of Protein argonaute 18 (AGO18) from Oryza sativa subsp. japonica (Rice).